A 479-amino-acid polypeptide reads, in one-letter code: MNWSHSCISFCWIYFAASRLRAAETADGKYAQKLFNDLFEDYSNALRPVEDTDKVLNVTLQITLSQIKDMDERNQILTAYLWIRQIWHDAYLTWDRDQYDGLDSIRIPSDLVWRPDIVLYNKADDESSEPVNTNVVLRYDGLITWDAPAITKSSCVVDVTYFPFDNQQCNLTFGSWTYNGNQVDIFNALDSGDLSDFIEDVEWEVHGMPAVKNVISYGCCSEPYPDVTFTLLLKRRSSFYIVNLLIPCVLISFLAPLSFYLPAASGEKVSLGVTILLAMTVFQLMVAEIMPASENVPLIGKYYIATMALITASTALTIMVMNIHFCGAEARPVPHWARVVILKYMSRVLFVYDVGESCLSPHHSRERDHLTKVYSKLPESNLKAARNKDLSRKKDMNKRLKNDLGCQGKNPQEAESYCAQYKVLTRNIEYIAKCLKDHKATNSKGSEWKKVAKVIDRFFMWIFFIMVFVMTILIIARAD.

Positions 1-22 are cleaved as a signal peptide; sequence MNWSHSCISFCWIYFAASRLRA. At 23-238 the chain is on the extracellular side; it reads AETADGKYAQ…FTLLLKRRSS (216 aa). N-linked (GlcNAc...) asparagine glycosylation occurs at Asn-57. Cys-155 and Cys-169 are disulfide-bonded. Asn-170 carries an N-linked (GlcNAc...) asparagine glycan. Na(+)-binding residues include Ser-191 and Asp-193. A disulfide bond links Cys-219 and Cys-220. The next 3 membrane-spanning stretches (helical) occupy residues 239-259, 269-289, and 303-323; these read FYIVNLLIPCVLISFLAPLSF, VSLGVTILLAMTVFQLMVAEI, and YIATMALITASTALTIMVMNI. The Cytoplasmic segment spans residues 324 to 457; that stretch reads HFCGAEARPV…WKKVAKVIDR (134 aa). The helical transmembrane segment at 458 to 478 threads the bilayer; the sequence is FFMWIFFIMVFVMTILIIARA.

It belongs to the ligand-gated ion channel (TC 1.A.9) family. Acetylcholine receptor (TC 1.A.9.1) subfamily. Alpha-9/CHRNA9 sub-subfamily. As to quaternary structure, forms homo- or heteropentameric channels in conjunction with CHRNA10. The native outer hair cell receptor is composed of CHRNA9:CHRNA10 heterooligomers. Found in the stoichiometric form (CHRNA9)2:(CHRNA10)3. In terms of processing, N-glycosylated. As to expression, expressed in cochlea, keratinocytes, pituitary gland, B-cells and T-cells.

The protein resides in the synaptic cell membrane. Its subcellular location is the cell membrane. The catalysed reaction is Ca(2+)(in) = Ca(2+)(out). It catalyses the reaction K(+)(in) = K(+)(out). It carries out the reaction Na(+)(in) = Na(+)(out). The enzyme catalyses Mg(2+)(in) = Mg(2+)(out). With respect to regulation, activated by a myriad of ligands such as acetylcholine. AChR activity is inhibited by the antagonist alpha-conotoxins RgIA and GeXXA, small disulfide-constrained peptides from cone snails. Component of neuronal acetylcholine receptors (nAChRs) that function as pentameric, ligand-gated cation channels with high calcium permeability among other activities. nAChRs are excitatory neurotrasnmitter receptors formed by a collection of nAChR subunits known to mediate synaptic transmission in the nervous system and the neuromuscular junction. Each nAchR subunit confers differential attributes to channel properties, including activation, deactivation and desensitization kinetics, pH sensitivity, cation permeability, and binding to allosteric modulators. Forms either homopentamers or heteropentamers with CHRNA10. Expressed in the inner ear, in sympathetic neurons and in other non-neuronal cells, such as skin keratinocytes and lymphocytes. nAChR formed by CHRNA9:CHRNA10 mediate central nervous system control of auditory and vestibular sensory processing. The channel is permeable to a range of divalent cations including calcium, the influx of which may activate a potassium current which hyperpolarizes the cell membrane. In the ear, mediates synaptic transmission between efferent olivocochlear fibers and hair cells of the cochlea, this may lead to a reduction in basilar membrane motion, altering the activity of auditory nerve fibers and reducing the range of dynamic hearing. This may protect against acoustic trauma. May also regulate keratinocyte adhesion. This chain is Neuronal acetylcholine receptor subunit alpha-9, found in Homo sapiens (Human).